The primary structure comprises 182 residues: Ribosome-recycling factor (182 aa).

This sequence belongs to the RRF family.

It is found in the cytoplasm. Functionally, responsible for the release of ribosomes from messenger RNA at the termination of protein biosynthesis. May increase the efficiency of translation by recycling ribosomes from one round of translation to another. The polypeptide is Ribosome-recycling factor (Prochlorococcus marinus (strain MIT 9313)).